A 248-amino-acid polypeptide reads, in one-letter code: Phosphoglycerate mutase (248 aa).

Residues 8-15 (RHGQSEWN), 21-22 (TG), Arg-60, 87-90 (ERHY), Lys-98, 114-115 (RR), and 183-184 (GN) contribute to the substrate site. His-9 serves as the catalytic Tele-phosphohistidine intermediate. The active-site Proton donor/acceptor is the Glu-87.

It belongs to the phosphoglycerate mutase family. BPG-dependent PGAM subfamily.

Its subcellular location is the cytoplasm. It carries out the reaction (2R)-2-phosphoglycerate = (2R)-3-phosphoglycerate. The protein operates within carbohydrate degradation; glycolysis; pyruvate from D-glyceraldehyde 3-phosphate: step 3/5. The polypeptide is Phosphoglycerate mutase (GPM1) (Candida albicans (strain SC5314 / ATCC MYA-2876) (Yeast)).